A 675-amino-acid polypeptide reads, in one-letter code: Potassium-transporting ATPase ATP-binding subunit (675 aa).

4 consecutive transmembrane segments (helical) span residues 34–54 (IMFV…FPDI), 65–85 (LITI…SEAF), 216–236 (IALF…IVTL), and 245–265 (LILP…TTIG). D304 functions as the 4-aspartylphosphate intermediate in the catalytic mechanism. Residues D341, E345, 372 to 379 (FTAETRMS), and K390 contribute to the ATP site. Positions 513 and 517 each coordinate Mg(2+). 3 helical membrane-spanning segments follow: residues 569-591 (ALTT…ALMM), 611-631 (AIIS…PIAM), and 644-664 (IFIN…FLGI).

The protein belongs to the cation transport ATPase (P-type) (TC 3.A.3) family. Type IA subfamily. In terms of assembly, the system is composed of three essential subunits: KdpA, KdpB and KdpC.

The protein resides in the cell membrane. It carries out the reaction K(+)(out) + ATP + H2O = K(+)(in) + ADP + phosphate + H(+). In terms of biological role, part of the high-affinity ATP-driven potassium transport (or Kdp) system, which catalyzes the hydrolysis of ATP coupled with the electrogenic transport of potassium into the cytoplasm. This subunit is responsible for energy coupling to the transport system and for the release of the potassium ions to the cytoplasm. In Staphylococcus aureus (strain Newman), this protein is Potassium-transporting ATPase ATP-binding subunit.